Here is a 94-residue protein sequence, read N- to C-terminus: Protein TraQ (94 aa).

A run of 2 helical transmembrane segments spans residues 14 to 34 (ITGM…RLVY) and 37 to 57 (PWMA…FGAY).

In terms of assembly, interacts with pilin.

The protein localises to the cell inner membrane. Required for efficient expression of pilin. Functions as a transient chaperone for propilin, preventing it from being prematurely degraded, and also promotes propilin translocation, positioning it in the membrane for processing to mature pilin. This Escherichia coli (strain K12) protein is Protein TraQ (traQ).